The primary structure comprises 259 residues: Enkurin (259 aa).

Disordered stretches follow at residues 1-26 (MVAM…EPPQ) and 76-98 (PPKK…TDHP). Over residues 76-88 (PPKKKFEWNERRK) the composition is skewed to basic and acidic residues. An SH3-binding motif is present at residues 86-92 (RRKPPVP). An Enkurin domain is found at 163 to 255 (KRNEEVKKAQ…VLEKHKVIYI (93 aa)). Residues 163–258 (KRNEEVKKAQ…KHKVIYIANK (96 aa)) are interaction with TRPC proteins. One can recognise an IQ domain in the interval 179-190 (IQENLRKAAMKR).

In terms of assembly, microtubule inner protein component of sperm flagellar doublet microtubules. Binds calmodulin via its IQ domain. Interacts with TRPC1, TRPC2, TRPC5, but not TRPC3. Interacts with CFAP45. As to expression, expressed in trachea multiciliated cells.

Its subcellular location is the cytoplasm. The protein localises to the cytoskeleton. The protein resides in the flagellum axoneme. It is found in the cilium axoneme. Functionally, adapter that functions to localize a calcium-sensitive signal transduction machinery in sperm to a calcium-permeable ion channel. Microtubule inner protein (MIP) part of the dynein-decorated doublet microtubules (DMTs) in cilia axoneme, which is required for motile cilia beating. The protein is Enkurin (ENKUR) of Bos taurus (Bovine).